We begin with the raw amino-acid sequence, 371 residues long: MSEPFMNAPWQPPGDHPALKSPQPTGILIDSVRKLYPARKASAEVVALDDISLNVPKGSILGVIGRSGAGKSTLIRLINGLDKPTAGRVVVNDVEITSLDEPALRRARRSIGMVFQHFNLLSSRTAFANVALPLEIAGTPKAEIEKRVLPLLDMVGLADKRDRYPAELSGGQKQRVGIARALATEPAVLLSDEATSALDPETTDQILDLLKQINRDLHLTILFITHEMAVVKALADRVAVIEAGRIVEEGATFDVFATPRHEVTRRFVSSVTGSGAPDWLLAQLQPLQPPGGKAVLRVTFKGSDASQPLLSRVARTLGVDLNILFGQVEMIAGHPFGTLIVSLDASPDVLRQVIAQLSAGNNLVEQLGYVA.

The segment at Met-1 to Pro-22 is disordered. An ABC transporter domain is found at Ile-27–Val-268. Residue Gly-65–Ser-72 coordinates ATP.

The protein belongs to the ABC transporter superfamily. Methionine importer (TC 3.A.1.24) family. In terms of assembly, the complex is composed of two ATP-binding proteins (MetN), two transmembrane proteins (MetI) and a solute-binding protein (MetQ).

Its subcellular location is the cell inner membrane. The catalysed reaction is L-methionine(out) + ATP + H2O = L-methionine(in) + ADP + phosphate + H(+). It carries out the reaction D-methionine(out) + ATP + H2O = D-methionine(in) + ADP + phosphate + H(+). Its function is as follows. Part of the ABC transporter complex MetNIQ involved in methionine import. Responsible for energy coupling to the transport system. This Rhodopseudomonas palustris (strain BisB5) protein is Methionine import ATP-binding protein MetN.